The primary structure comprises 261 residues: Class II histocompatibility antigen, M alpha chain (261 aa).

The N-terminal stretch at 1 to 26 is a signal peptide; the sequence is MEHEQKSGAVLLRLLRLLWLLPHSWA. An alpha-1 region spans residues 27 to 124; the sequence is VLEASTPVLW…KLEGQIPVSR (98 aa). Over 27 to 231 the chain is Lumenal; it reads VLEASTPVLW…ALPSDLLENA (205 aa). N-linked (GlcNAc...) asparagine glycosylation occurs at Asn41. Disulfide bonds link Cys50–Cys105 and Cys147–Cys202. Residues 114 to 215 form the Ig-like C1-type domain; it reads PKLEGQIPVS…HEIDRYTAIA (102 aa). The interval 125-217 is alpha-2; sequence GLSVAEVFTL…IDRYTAIAYW (93 aa). The connecting peptide stretch occupies residues 218-231; it reads VPQNALPSDLLENA. The chain crosses the membrane as a helical span at residues 232 to 252; sequence LCGVAFALGVLGTIIGIVFFL. Topologically, residues 253-261 are cytoplasmic; that stretch reads CSQRPCSGD.

Belongs to the MHC class II family. As to quaternary structure, heterodimer of an alpha chain (DMA) and a beta chain (DMB). Interacts with MHCII; this interaction mediates rapid selection of high-affinity peptides.

The protein localises to the late endosome membrane. The protein resides in the lysosome membrane. In terms of biological role, plays a critical role in catalyzing the release of class II-associated invariant chain peptide (CLIP) from newly synthesized MHC class II molecules and freeing the peptide binding site for acquisition of antigenic peptides. This chain is Class II histocompatibility antigen, M alpha chain (H2-DMa), found in Mus musculus (Mouse).